Here is a 526-residue protein sequence, read N- to C-terminus: Fumitremorgin C synthase (526 aa).

A helical membrane pass occupies residues 4–24; sequence LPLSPAVLFLTITLPILYFWI. Heme is bound at residue cysteine 443.

It belongs to the cytochrome P450 family. Requires heme as cofactor.

Its subcellular location is the membrane. It catalyses the reaction tryprostatin A + reduced [NADPH--hemoprotein reductase] + O2 = fumitremorgin C + oxidized [NADPH--hemoprotein reductase] + 2 H2O + H(+). It participates in mycotoxin biosynthesis. Its function is as follows. Cytochrome P450 monooxygenase; part of the gene cluster that mediates the biosynthesis of fumitremorgins, indole alkaloids that carry not only intriguing chemical structures, but also interesting biological and pharmacological activities. The biosynthesis of fumitremorgin-type alkaloids begins by condensation of the two amino acids L-tryptophan and L-proline to brevianamide F, catalyzed by the non-ribosomal peptide synthetase ftmPS/ftmA. Brevianamide F is then prenylated by the prenyltransferase ftmPT1/ftmB in the presence of dimethylallyl diphosphate, resulting in the formation of tryprostatin B. The three cytochrome P450 monooxygenases, ftmP450-1/ftmC, ftmP450-2/ftmE and ftmP450-3/FtmG, are responsible for the conversion of tryprostatin B to 6-hydroxytryprostatin B, tryprostatin A to fumitremorgin C and fumitremorgin C to 12,13-dihydroxyfumitremorgin C, respectively. The putative methyltransferase ftmMT/ftmD is expected for the conversion of 6-hydroxytryprostatin B to tryprostatin A. FtmPT2/FtmH catalyzes the prenylation of 12,13-dihydroxyfumitre-morgin C in the presence of dimethylallyl diphosphate, resulting in the formation of fumitremorgin B. Fumitremorgin B is further converted to verruculogen by ftmOx1/ftmF via the insertion of an endoperoxide bond between the two prenyl moieties. Finally, verruculogen is further converted to fumitremorgin A by the verruculogen prenyltransferase ftmPT3. The protein is Fumitremorgin C synthase of Neosartorya fischeri (strain ATCC 1020 / DSM 3700 / CBS 544.65 / FGSC A1164 / JCM 1740 / NRRL 181 / WB 181) (Aspergillus fischerianus).